Consider the following 354-residue polypeptide: Guanine nucleotide-binding protein G(i) subunit alpha-3 (354 aa).

Gly-2 is lipidated: N-myristoyl glycine. A lipid anchor (S-palmitoyl cysteine) is attached at Cys-3. In terms of domain architecture, G-alpha spans 32–354; sequence KEVKLLLLGA…KNNLKECGLY (323 aa). Residues 35-48 are G1 motif; the sequence is KLLLLGAGESGKST. Residues Gly-42, Glu-43, Ser-44, Gly-45, Lys-46, Ser-47, Thr-48, Asp-150, Ser-151, Leu-175, Arg-176, Thr-177, Arg-178, Val-179, Lys-180, Thr-181, Val-201, Gly-203, Asn-269, Lys-270, Asp-272, Leu-273, Cys-325, Ala-326, and Thr-327 each contribute to the GTP site. A Mg(2+)-binding site is contributed by Ser-47. A G2 motif region spans residues 173 to 181; that stretch reads DVLRTRVKT. Thr-181 contributes to the Mg(2+) binding site. A G3 motif region spans residues 196–205; it reads FKMFDVGGQR. The interval 265–272 is G4 motif; that stretch reads ILFLNKKD. The segment at 324–329 is G5 motif; sequence TCATDT.

It belongs to the G-alpha family. G(i/o/t/z) subfamily. In terms of assembly, heterotrimeric G proteins are composed of 3 units; alpha, beta and gamma. The alpha subunit contains the guanine nucleotide binding site. GTP binding causes dissociation of the heterotrimer, liberating the individual subunits so that they can interact with downstream effector proteins. Forms a complex with CCDC88A/GIV and EGFR which leads to enhanced EGFR signaling and triggering of cell migration; ligand stimulation is required for recruitment of GNAI3 to the complex. Interacts (inactive GDP-bound form) with CCDC88A/GIV (via GBA motif); the interaction leads to activation of GNAI3. Interacts (inactive GDP-bound form) with CCDC88C/DAPLE (via GBA motif); the interaction leads to activation of GNAI3. Interacts (inactive GDP-bound form) with NUCB1 (via GBA motif) and NUCB2 (via GBA motif); the interaction leads to activation of GNAI3. Interacts (inactive GDP-bound form) with PLCD4 (via GBA motif); the interaction leads to activation of GNAI3. Interacts with INSR; the interaction is probably mediated by CCDC88A/GIV. Interacts with GPSM1. Interacts (GDP-bound form) with GPSM2 (via GoLoco domains). Does not interact with RGS2. Interacts with RGS8 and RGS10; this strongly enhances the intrinsic GTPase activity. Interacts with RGS16; this strongly enhances the intrinsic GTPase activity. Interacts with RGS12. Interacts (via active GTP- or inactive GDP-bound form) with RGS14. Interacts (via active GTP-bound form) with TRPC5 (via ANK repeats) in a homotetrameric ion channel; the interaction is direct and activates the channel activity.

The protein resides in the cytoplasm. It is found in the cell membrane. It localises to the cytoskeleton. Its subcellular location is the microtubule organizing center. The protein localises to the centrosome. Its function is as follows. Heterotrimeric guanine nucleotide-binding proteins (G proteins) function as transducers downstream of G protein-coupled receptors (GPCRs) in numerous signaling cascades. The alpha chain contains the guanine nucleotide binding site and alternates between an active, GTP-bound state and an inactive, GDP-bound state. Signaling by an activated GPCR promotes GDP release and GTP binding. The alpha subunit has a low GTPase activity that converts bound GTP to GDP, thereby terminating the signal. Both GDP release and GTP hydrolysis are modulated by numerous regulatory proteins. Signaling is mediated via effector proteins, such as adenylate cyclase. Inhibits adenylate cyclase activity, leading to decreased intracellular cAMP levels. Stimulates the activity of receptor-regulated K(+) channels. The active GTP-bound form prevents the association of RGS14 with centrosomes and is required for the translocation of RGS14 from the cytoplasm to the plasma membrane. May play a role in cell division. The active GTP-bound form activates the calcium permeant TRPC5 ion channels. This chain is Guanine nucleotide-binding protein G(i) subunit alpha-3 (Gnai3), found in Mus musculus (Mouse).